The following is a 333-amino-acid chain: Alpha-N-acetylgalactosaminide alpha-2,6-sialyltransferase 6 (333 aa).

The span at 1 to 12 (MACSRPPSQCEP) shows a compositional bias: polar residues. The segment at 1 to 26 (MACSRPPSQCEPTSLPPGPPAGRRHL) is disordered. Residues 1–43 (MACSRPPSQCEPTSLPPGPPAGRRHLPLSRRRREMSSNKEQRS) are Cytoplasmic-facing. The chain crosses the membrane as a helical; Signal-anchor for type II membrane protein span at residues 44-64 (AVFVILFALITILILYSSNSA). The Lumenal portion of the chain corresponds to 65 to 333 (NEVFHYGSLR…GITFSHPSWT (269 aa)). N-linked (GlcNAc...) asparagine glycosylation occurs at Asn98. A disulfide bridge links Cys108 with Cys256.

It belongs to the glycosyltransferase 29 family. In terms of tissue distribution, expressed in kidney, in proximal tubule epithelial cells. Expressed in colon cell lines.

It is found in the golgi apparatus membrane. It catalyses the reaction a ganglioside GM1b (d18:1(4E)) + CMP-N-acetyl-beta-neuraminate = a ganglioside GD1alpha (d18:1(4E)) + CMP + H(+). The enzyme catalyses N-acetyl-alpha-neuraminosyl-(2-&gt;3)-beta-D-galactosyl-(1-&gt;3)-N-acetyl-beta-D-glucosaminyl-(1-&gt;3)-beta-D-galactosyl-(1-&gt;4)-beta-D-glucosyl-(1&lt;-&gt;1')-N-acyl-sphing-4-enine + CMP-N-acetyl-beta-neuraminate = N-acetyl-alpha-neuraminosyl-(2-&gt;3)-beta-D-galactosyl-(1-&gt;3)-[N-acetyl-alpha-neuraminosyl-(2-&gt;6)]-N-acetyl-beta-D-glucosaminyl-(1-&gt;3)-beta-D-galactosyl-(1-&gt;4)-beta-D-glucosyl-(1&lt;-&gt;1')-N-acyl-sphing-4-enine + CMP + H(+). It carries out the reaction a globoside MSGG + CMP-N-acetyl-beta-neuraminate = a globoside DSGG + CMP + H(+). The catalysed reaction is a ganglioside GD1a (d18:1(4E)) + CMP-N-acetyl-beta-neuraminate = a ganglioside GT1aalpha (d18:1(4E)) + CMP + H(+). It catalyses the reaction a ganglioside GT1b (d18:1(4E)) + CMP-N-acetyl-beta-neuraminate = a ganglioside GQ1balpha (d18:1(4E)) + CMP + H(+). The enzyme catalyses 3-O-[alpha-Neu5Ac-(2-&gt;3)-beta-D-Gal-(1-&gt;3)-alpha-D-GalNAc]-L-Ser-[protein] + CMP-N-acetyl-beta-neuraminate = a 3-O-{alpha-Neu5Ac-(2-&gt;3)-beta-D-Gal-(1-&gt;3)-[alpha-Neu5Ac-(2-&gt;6)]-alpha-D-GalNAc}-L-seryl-[protein] + CMP + H(+). It carries out the reaction 3-O-[alpha-Neu5Ac-(2-&gt;3)-beta-D-Gal-(1-&gt;3)-alpha-D-GalNAc]-L-Thr-[protein] + CMP-N-acetyl-beta-neuraminate = a 3-O-{alpha-Neu5Ac-(2-&gt;3)-beta-D-Gal-(1-&gt;3)-[alpha-Neu5Ac-(2-&gt;6)]-alpha-D-GalNAc}-L-threonyl-[protein] + CMP + H(+). Functionally, transfers the sialyl group (N-acetyl-alpha-neuraminyl or NeuAc) from CMP-NeuAc onto glycoproteins and glycolipids, forming an alpha-2,6-linkage. Produces branched type disialyl structures by transfer of a sialyl group onto the GalNAc or GlcNAc residue inside backbone core chains having a terminal sialic acid with an alpha-2,3-linkage on Gal. ST6GalNAcVI prefers glycolipids to glycoproteins, predominantly catalyzing the biosynthesis of ganglioside GD1alpha from GM1b. Besides GMb1, MSGG and other glycolipids, it shows activity towards sialyl Lc4Cer generating disialyl Lc4Cer, which can lead to the synthesis of disialyl Lewis a (Le(a)), suggested to be a cancer-associated antigen. Also has activity toward GD1a and GT1b, and can generate DSGG (disialylgalactosylgloboside) from MSGG (monosialylgalactosylgloboside). The sequence is that of Alpha-N-acetylgalactosaminide alpha-2,6-sialyltransferase 6 (ST6GALNAC6) from Homo sapiens (Human).